The primary structure comprises 46 residues: Photosystem II reaction center protein K (46 aa).

Residues 1-9 (MLILFNTFA) constitute a propeptide that is removed on maturation. Residues 25 to 45 (LPLIPLFFFLLVFVWQAAVGF) form a helical membrane-spanning segment.

It belongs to the PsbK family. PSII is composed of 1 copy each of membrane proteins PsbA, PsbB, PsbC, PsbD, PsbE, PsbF, PsbH, PsbI, PsbJ, PsbK, PsbL, PsbM, PsbT, PsbX, PsbY, Psb30/Ycf12, peripheral proteins PsbO, CyanoQ (PsbQ), PsbU, PsbV and a large number of cofactors. It forms dimeric complexes.

The protein localises to the cellular thylakoid membrane. In terms of biological role, one of the components of the core complex of photosystem II (PSII). PSII is a light-driven water:plastoquinone oxidoreductase that uses light energy to abstract electrons from H(2)O, generating O(2) and a proton gradient subsequently used for ATP formation. It consists of a core antenna complex that captures photons, and an electron transfer chain that converts photonic excitation into a charge separation. The sequence is that of Photosystem II reaction center protein K from Prochlorococcus marinus (strain MIT 9301).